The following is a 573-amino-acid chain: Urease subunit alpha (573 aa).

The Ni(2+) site is built by histidine 139, histidine 141, and lysine 222. Lysine 222 carries the N6-carboxylysine modification. Histidine 224 provides a ligand contact to substrate. The Ni(2+) site is built by histidine 251 and histidine 277. Histidine 325 functions as the Proton donor in the catalytic mechanism. Aspartate 365 lines the Ni(2+) pocket.

This sequence belongs to the metallo-dependent hydrolases superfamily. Urease alpha subunit family. Heterotrimer of UreA (gamma), UreB (beta) and UreC (alpha) subunits. Three heterotrimers associate to form the active enzyme. Ni cation is required as a cofactor. Carboxylation allows a single lysine to coordinate two nickel ions.

Its subcellular location is the cytoplasm. It catalyses the reaction urea + 2 H2O + H(+) = hydrogencarbonate + 2 NH4(+). It functions in the pathway nitrogen metabolism; urea degradation; CO(2) and NH(3) from urea (urease route): step 1/1. The protein is Urease subunit alpha of Flavobacterium johnsoniae (strain ATCC 17061 / DSM 2064 / JCM 8514 / BCRC 14874 / CCUG 350202 / NBRC 14942 / NCIMB 11054 / UW101) (Cytophaga johnsonae).